The sequence spans 348 residues: Protein-arginine N-acetylglucosaminyltransferase SseK2 (348 aa).

UDP-N-acetyl-alpha-D-glucosamine-binding positions include 64 to 66, Tyr88, and 237 to 240; these read QWF and YLDA. The DXD motif signature appears at 239–241; that stretch reads DAD. A Mn(2+)-binding site is contributed by Asp241. Glu271 serves as the catalytic Proton acceptor. Residues Asn338, Ser340, and 345–348 contribute to the UDP-N-acetyl-alpha-D-glucosamine site; that span reads SSWR. The Mn(2+) site is built by Asn338 and Ser340.

The protein belongs to the glycosyltransferase NleB family. The cofactor is Mn(2+).

The protein localises to the secreted. Its subcellular location is the host Golgi apparatus. The catalysed reaction is L-arginyl-[protein] + UDP-N-acetyl-alpha-D-glucosamine = N(omega)-(N-acetyl-beta-D-glucosaminyl)-L-arginyl-[protein] + UDP + H(+). Protein-arginine N-acetylglucosaminyltransferase activity is inhibited by 100066N compound (flavone analog) and 102644N compound (a substituted isoxazole). Functionally, protein-arginine N-acetylglucosaminyltransferase effector that catalyzes the transfer of a single N-acetylglucosamine (GlcNAc) to a conserved arginine residue in the death domain of host proteins such as FADD: arginine GlcNAcylation prevents homotypic/heterotypic death domain interactions. Also acts on host proteins without a death domain: catalyzes arginine GlcNAcylation of host small Rab1 GTPase, thereby preventing GTPase activity and leading to impaired host vesicular protein transport. In contrast to Ssek1, not able to disrupt TNF signaling in infected cells. The sequence is that of Protein-arginine N-acetylglucosaminyltransferase SseK2 from Salmonella typhimurium (strain SL1344).